Here is a 174-residue protein sequence, read N- to C-terminus: Chromophore lyase CpcS/CpeS 1 (174 aa).

The protein belongs to the CpcS/CpeS biliprotein lyase family.

Its function is as follows. Covalently attaches a chromophore to Cys residue(s) of phycobiliproteins. The sequence is that of Chromophore lyase CpcS/CpeS 1 from Trichodesmium erythraeum (strain IMS101).